Reading from the N-terminus, the 1036-residue chain is Protein CLEC16A (1036 aa).

The region spanning 51 to 198 (IRSITEILIW…AVRTITLNVY (148 aa)) is the FPL domain. Disordered regions lie at residues 375 to 416 (SLEM…DAEK), 437 to 458 (GTSV…NSEN), 876 to 967 (HSSP…PSLL), and 1008 to 1036 (SQLP…PTEH). Residues 381-392 (HKGKKRMQKRPN) show a composition bias toward basic residues. Low complexity-rich tracts occupy residues 877-891 (SSPS…FASG), 898-923 (STSH…APTT), and 943-954 (NSKPSKNSSARS).

Belongs to the CLEC16A/gop-1 family. In terms of assembly, interacts with RNF41/NRDP1. In terms of tissue distribution, ubiquitously expressed. Expressed in pancreatic islets.

The protein resides in the endosome membrane. Its subcellular location is the lysosome membrane. Functionally, regulator of mitophagy through the upstream regulation of the RNF41/NRDP1-PRKN pathway. Mitophagy is a selective form of autophagy necessary for mitochondrial quality control. The RNF41/NRDP1-PRKN pathway regulates autophagosome-lysosome fusion during late mitophagy. May protect RNF41/NRDP1 from proteasomal degradation, RNF41/NRDP1 which regulates proteasomal degradation of PRKN. Plays a key role in beta cells functions by regulating mitophagy/autophagy and mitochondrial health. The protein is Protein CLEC16A of Mus musculus (Mouse).